The following is a 151-amino-acid chain: MLP-like protein 329 (151 aa).

The protein belongs to the MLP family.

The protein is MLP-like protein 329 (MLP329) of Arabidopsis thaliana (Mouse-ear cress).